The chain runs to 287 residues: Large ribosomal subunit protein uL2 (287 aa).

Residues 221–287 (RGSVMNPCDH…SKRSRGGRDS (67 aa)) are disordered. A compositionally biased stretch (basic residues) spans 271-287 (LRKRRKTSKRSRGGRDS).

It belongs to the universal ribosomal protein uL2 family. As to quaternary structure, part of the 50S ribosomal subunit. Forms a bridge to the 30S subunit in the 70S ribosome.

Functionally, one of the primary rRNA binding proteins. Required for association of the 30S and 50S subunits to form the 70S ribosome, for tRNA binding and peptide bond formation. It has been suggested to have peptidyltransferase activity; this is somewhat controversial. Makes several contacts with the 16S rRNA in the 70S ribosome. The protein is Large ribosomal subunit protein uL2 of Synechococcus sp. (strain CC9902).